We begin with the raw amino-acid sequence, 747 residues long: ATPase family gene 2 protein homolog B (747 aa).

M1 is modified (N-acetylmethionine). ATP is bound by residues 234–241 (GPPGVGKT) and 500–507 (GPPGCAKT).

It belongs to the AAA ATPase family. AFG2 subfamily. In terms of assembly, part of the 55LCC heterohexameric ATPase complex composed at least of AIRIM, AFG2A, AFG2B and CINP. Associates with pre-60S ribosomal particles. In adult ear, expressed at low levels in neurosensory hair cells (inner and outer) and supporting cells (pillar and Deiter cells).

It is found in the cytoplasm. Its subcellular location is the cytoskeleton. The protein resides in the spindle. The protein localises to the nucleus. The enzyme catalyses ATP + H2O = ADP + phosphate + H(+). Its activity is regulated as follows. In the context of 55LCC heterohexameric ATPase complex, the ATPase activity is stimulated by DNA binding and inhibited in presence of RNA. ATP-dependent chaperone part of the 55LCC heterohexameric ATPase complex which is chromatin-associated and promotes replisome proteostasis to maintain replication fork progression and genome stability. Required for replication fork progression, sister chromatid cohesion, and chromosome stability. The ATPase activity is specifically enhanced by replication fork DNA and is coupled to cysteine protease-dependent cleavage of replisome substrates in response to replication fork damage. Uses ATPase activity to process replisome substrates in S-phase, facilitating their proteolytic turnover from chromatin to ensure DNA replication and mitotic fidelity. Plays an essential role in the cytoplasmic maturation steps of pre-60S ribosomal particles by promoting the release of shuttling protein RSL24D1/RLP24 from the pre-ribosomal particles. This Mus musculus (Mouse) protein is ATPase family gene 2 protein homolog B (Afg2b).